A 326-amino-acid chain; its full sequence is Tumor necrosis factor soluble receptor (326 aa).

The signal sequence occupies residues 1–16 (MFRLTLLLAYVACVYG). 4 TNFR-Cys repeats span residues 27–62 (KCRG…TVCS), 63–104 (PCKN…DRVC), 105–147 (DCSA…VLCT), and 148–186 (KCPR…TSCT). Disulfide bonds link Cys28–Cys39, Cys40–Cys53, Cys43–Cys61, Cys64–Cys79, Cys82–Cys96, Cys86–Cys104, Cys106–Cys120, Cys123–Cys146, Cys129–Cys149, and Cys164–Cys185. The N-linked (GlcNAc...) asparagine; by host glycan is linked to Asn66. Asn181, Asn205, and Asn238 each carry an N-linked (GlcNAc...) asparagine; by host glycan.

Binds to TNF-alpha and beta. Probably prevents TNF to reach cellular target and thereby deampening the potential antiviral effects of the cytokine. The polypeptide is Tumor necrosis factor soluble receptor (Oryctolagus cuniculus (Rabbit)).